Reading from the N-terminus, the 244-residue chain is 6-carboxyhexanoate--CoA ligase (244 aa).

This sequence belongs to the BioW family. As to quaternary structure, homodimer. Requires Mg(2+) as cofactor.

The catalysed reaction is heptanedioate + ATP + CoA = 6-carboxyhexanoyl-CoA + AMP + diphosphate. The protein operates within metabolic intermediate metabolism; pimeloyl-CoA biosynthesis; pimeloyl-CoA from pimelate: step 1/1. In terms of biological role, catalyzes the transformation of pimelate into pimeloyl-CoA with concomitant hydrolysis of ATP to AMP. The polypeptide is 6-carboxyhexanoate--CoA ligase (Methanococcus maripaludis (strain DSM 14266 / JCM 13030 / NBRC 101832 / S2 / LL)).